We begin with the raw amino-acid sequence, 181 residues long: NADH-quinone oxidoreductase subunit I (181 aa).

4Fe-4S ferredoxin-type domains are found at residues Thr52–Gly81 and Lys91–Asp120. Cys61, Cys64, Cys67, Cys71, Cys100, Cys103, Cys106, and Cys110 together coordinate [4Fe-4S] cluster.

It belongs to the complex I 23 kDa subunit family. In terms of assembly, NDH-1 is composed of 13 different subunits. Subunits NuoA, H, J, K, L, M, N constitute the membrane sector of the complex. The cofactor is [4Fe-4S] cluster.

Its subcellular location is the cell inner membrane. The enzyme catalyses a quinone + NADH + 5 H(+)(in) = a quinol + NAD(+) + 4 H(+)(out). Functionally, NDH-1 shuttles electrons from NADH, via FMN and iron-sulfur (Fe-S) centers, to quinones in the respiratory chain. The immediate electron acceptor for the enzyme in this species is believed to be ubiquinone. Couples the redox reaction to proton translocation (for every two electrons transferred, four hydrogen ions are translocated across the cytoplasmic membrane), and thus conserves the redox energy in a proton gradient. The sequence is that of NADH-quinone oxidoreductase subunit I from Blochmanniella pennsylvanica (strain BPEN).